Reading from the N-terminus, the 381-residue chain is Succinyl-diaminopimelate desuccinylase (381 aa).

A Zn(2+)-binding site is contributed by H68. D70 is a catalytic residue. A Zn(2+)-binding site is contributed by D101. Residue E135 is the Proton acceptor of the active site. E136, E164, and H350 together coordinate Zn(2+).

The protein belongs to the peptidase M20A family. DapE subfamily. As to quaternary structure, homodimer. The cofactor is Zn(2+). It depends on Co(2+) as a cofactor.

The catalysed reaction is N-succinyl-(2S,6S)-2,6-diaminopimelate + H2O = (2S,6S)-2,6-diaminopimelate + succinate. The protein operates within amino-acid biosynthesis; L-lysine biosynthesis via DAP pathway; LL-2,6-diaminopimelate from (S)-tetrahydrodipicolinate (succinylase route): step 3/3. Its function is as follows. Catalyzes the hydrolysis of N-succinyl-L,L-diaminopimelic acid (SDAP), forming succinate and LL-2,6-diaminopimelate (DAP), an intermediate involved in the bacterial biosynthesis of lysine and meso-diaminopimelic acid, an essential component of bacterial cell walls. This is Succinyl-diaminopimelate desuccinylase from Neisseria gonorrhoeae (strain ATCC 700825 / FA 1090).